A 301-amino-acid chain; its full sequence is TLR adapter interacting with SLC15A4 on the lysosome (301 aa).

Positions 290–294 (SLHIS) match the pLxIS motif motif. Phosphoserine is present on Ser-294.

Interacts (via pLxIS motif) with IRF5; leading to IRF5 activation. Interacts with SLC15A4; leading to its recruitment to endolysosome. The phosphorylated pLxIS motif constitutes an IRF5-binding motif, leading to recruitment of the transcription factor IRF5 to induce type-I interferons and other cytokines. As to expression, highly expressed in immune cell types such as B-cells, neutrophils, dendritic cells and monocytes, the expression levels are two-three-fold higher in female cells compared to male cells (at protein level). Expressed at low levels in T-cells and NK cells.

The protein resides in the lysosome membrane. The protein localises to the endosome membrane. It localises to the nucleus. Its subcellular location is the cytoplasm. Innate immune adapter that mediates the recruitment and activation of IRF5 downstream of endolysosomal toll-like receptors TLR7, TLR8 and TLR9. Following recruitment to endolysosome by SLC15A4 downstream of TLR7, TLR8 and TLR9, specifically recruits IRF5 transcription factor via its pLxIS motif, leading to IRF5 activation and subsequent expression of type I interferons. Plays a role in the regulation of endolysosomal pH in immune cells such as B-cells, dendritic cells and monocytes. The polypeptide is TLR adapter interacting with SLC15A4 on the lysosome (Homo sapiens (Human)).